A 117-amino-acid chain; its full sequence is Large ribosomal subunit protein uL24 (117 aa).

The protein belongs to the universal ribosomal protein uL24 family. In terms of assembly, part of the 50S ribosomal subunit.

One of two assembly initiator proteins, it binds directly to the 5'-end of the 23S rRNA, where it nucleates assembly of the 50S subunit. Its function is as follows. One of the proteins that surrounds the polypeptide exit tunnel on the outside of the subunit. The chain is Large ribosomal subunit protein uL24 from Nostoc punctiforme (strain ATCC 29133 / PCC 73102).